Reading from the N-terminus, the 326-residue chain is tRNA-modifying protein YgfZ (326 aa).

Residues W27 and W189 each coordinate folate.

Belongs to the tRNA-modifying YgfZ family.

It localises to the cytoplasm. Folate-binding protein involved in regulating the level of ATP-DnaA and in the modification of some tRNAs. It is probably a key factor in regulatory networks that act via tRNA modification, such as initiation of chromosomal replication. The chain is tRNA-modifying protein YgfZ from Escherichia coli O6:K15:H31 (strain 536 / UPEC).